Consider the following 439-residue polypeptide: MNMYHDADRALLDPMETASVDALRQHQLERLRWSLKHAYDNVPLYRQRFAECGAHPDDLTCLEDLAKFPFTGKNDLRDNYPYGMFAVPQEEVVRLHASSGTTGKPTVVGYTQNDINTWANVVARSIRAAGGRKGDKVHVSYGYGLFTGGLGAHYGAERLGCTVIPMSGGQTEKQVQLIRDFQPDIIMVTPSYMLNLADEIERQGIDPHDLKLRLGIFGAEPWTDELRRSIEQRLGINALDIYGLSEIMGPGVAMECIETKDGPTIWEDHFYPEIIDPVTGEVLPDGQLGELVFTSLSKEALPMVRYRTRDLTRLLPGTARPMRRIGKITGRSDDMLIIRGVNVFPTQIEEQVLKIKQLSEMYEIHLYRNGNLDSVEVHVELRAECQHLDEGQRKLVIGELSKQIKTYIGISTQVHLQACGTLKRSEGKACHVYDKRLAS.

It belongs to the phenylacetyl-CoA ligase family. Monomer.

It catalyses the reaction 2-phenylacetate + ATP + CoA = phenylacetyl-CoA + AMP + diphosphate. It functions in the pathway aromatic compound metabolism; phenylacetate degradation. With respect to regulation, inhibited by divalent cations (zinc, copper, mercury) and by the sulfhydryl reagents 5,5-dithiobis(2-nitrobenzoic acid), N-ethylmaleimide and p-chloromercuribenzoate. Its function is as follows. Catalyzes the activation of phenylacetic acid (PA) to phenylacetyl-CoA (PA-CoA). Involved in the phenylalanine metabolism. Can also use CTP and UTP as substrate. This is Phenylacetate-coenzyme A ligase (paaK) from Pseudomonas putida (Arthrobacter siderocapsulatus).